We begin with the raw amino-acid sequence, 569 residues long: Sulfite reductase [NADPH] hemoprotein beta-component (569 aa).

4 residues coordinate [4Fe-4S] cluster: Cys-433, Cys-439, Cys-478, and Cys-482. Siroheme is bound at residue Cys-482.

It belongs to the nitrite and sulfite reductase 4Fe-4S domain family. As to quaternary structure, alpha(8)-beta(8). The alpha component is a flavoprotein, the beta component is a hemoprotein. It depends on siroheme as a cofactor. The cofactor is [4Fe-4S] cluster.

It carries out the reaction hydrogen sulfide + 3 NADP(+) + 3 H2O = sulfite + 3 NADPH + 4 H(+). The protein operates within sulfur metabolism; hydrogen sulfide biosynthesis; hydrogen sulfide from sulfite (NADPH route): step 1/1. Functionally, component of the sulfite reductase complex that catalyzes the 6-electron reduction of sulfite to sulfide. This is one of several activities required for the biosynthesis of L-cysteine from sulfate. In Shewanella sediminis (strain HAW-EB3), this protein is Sulfite reductase [NADPH] hemoprotein beta-component.